The sequence spans 1687 residues: MRVLVLALTVALVAGNQVSYAPEFAPGKTYEYKYEGYILGGLPEEGLAKAGVKIQSKVLIGAAGPDSYILKLEDPVISGYSGIWPKEVFHPATKLTSALSAQLLTPVKFEYANGVIGKVFAPPGISTNVLNVFRGLLNMFQMNIKKTQNVYDLQETGVKGVCKTHYILHEDSKADRLHLTKTTDLNHCTDSIHMDVGMAGYTEKCAECMARGKTLSGAISVNYIMKPSASGTLILEATATELLQYSPVNIVNGAVQMEAKQTVTFVDIRKTPLEPLKADYIPRGSLKYELGTEFLQTPIQLLRITNVEAQIVESLNNLVSLNMGHAHEDSPLKFIELIQLLRVAKYESIEALWSQFKTKIDHRHWLLSSIPAIGTHVALKFIKEKIVAGEVTAAEAAQAIMSSTHLVKADLEAIKLQEGLAVTPNIRENAGLRELVMLGFGIMVHKYCVENPSCPSELVRPVHDIIAKALEKRDNDELSLALKVLGNAGHPSSLKPIMKLLPGFGSSASELELRVHIDATLALRKIGKREPKMIQDVALQLFMDRTLDPELRMVAVVVLFDTKLPMGLITTLAQSLLKEPNLQVLSFVYSYMKAFTKTTTPDHSTVAAACNVAIRILSPRFERLSYRYSRAFHYDHYHNPWMLGAAASAFYINDAATVLPKNIMAKARVYLSGVSVDVLEFGARAEGVQEALLKARDVPESADRLTKMKQALKALTEWRANPSRQPLGSLYVKVLGQDVAFANIDKEMVEKIIEFATGPEIRTRGKKALDALLSGYSMKYSKPMSAIEVRHIFPTSLGLPMELSLYTAAVTAASVEVQATISPPLPEDFHPAHLLKSDISMKASVTPSVSLHTYGVMGVNSPFIQASVLSRAKDHAALPKKMEARLDIVKGYFSYQFLPVEGVKTIASARLETVAIARDVEGLAAAKVTPVVPYEPIVSKNATLNLSQMSYYLNDSISASSELLPFSLQRQTGKNKIPKPIVKKMCATTYTYGIEGCVDIWSRNATFLRNTPIYAIIGNHSLLVNVTPAAGPSIERIEIEVQFGEQAAEKILKEVYLNEEEEVLEDKNVLMKLKKILSPGLKNSTKASSSSSGSSRSSRSRSSSSSSSSSSSSSSRSSSSSSRSSSSLRRNSKMLDLADPLNITSKRSSSSSSSSSSSSSSSSSSSSSSKTKWQLHERNFTKDHIHQHSVSKERLNSKSSASSFESIYNKITYLSNIVSPVVTVLVRAIRADHKNQGYQIAVYYDKLTTRVQIIVANLTEDDNWRICSDSMMLSHHKVMTRVTWGIGCKQYNTTIVAETGRVEKEPAVRVKLAWARLPTYIRDYARRVSRYISRVAEDNGVNRTKVASKPKEIKLTVAVANETSLNVTLNTPKNTFFKLGWVLPFYLPINNTAAELQAFQGRWMDQVTYMLTKSAAAECTVVEDTVVTFNNRKYKTETPHSCHQVLAQDCTSEIKFIVLLKRDQTAERNEISIKIENIDVDMYPKDNAVVVKVNGVEIPLTNLPYQHPTGNIQIRQREEGISLHAPSHGLQEVFLSLNKVQVKVVDWMRGQTCGLCGKADGEVRQEYSTPNERVSRNATSFAHSWVLPAKSCRDASECYMQLESVKLEKQISLEGEESKCYSVEPVWRCLPGCAPVRTTSVTVGLPCVSLDSNLNRSDSLSSIYQKSVDVSETAESHLACRCTPQCA.

The signal sequence occupies residues 1 to 15 (MRVLVLALTVALVAG). The 640-residue stretch at 24–663 (FAPGKTYEYK…DAATVLPKNI (640 aa)) folds into the Vitellogenin domain. 6 N-linked (GlcNAc...) asparagine glycosylation sites follow: N941, N945, N954, N1004, N1019, and N1083. Positions 1081–1174 (LKNSTKASSS…SSSSSKTKWQ (94 aa)) are disordered. The span at 1088 to 1127 (SSSSSGSSRSSRSRSSSSSSSSSSSSSSRSSSSSSRSSSS) shows a compositional bias: low complexity. N1142 carries an N-linked (GlcNAc...) asparagine glycan. The span at 1148 to 1169 (SSSSSSSSSSSSSSSSSSSSSS) shows a compositional bias: low complexity. N-linked (GlcNAc...) asparagine glycosylation is found at N1179, N1257, N1292, N1342, N1361, N1366, and N1390. A VWFD domain is found at 1417 to 1593 (AECTVVEDTV…SWVLPAKSCR (177 aa)). 2 disulfide bridges follow: C1419/C1556 and C1442/C1592. Residues N1577 and N1655 are each glycosylated (N-linked (GlcNAc...) asparagine).

Phosvitin, an egg yolk storage protein, is one of the most highly phosphorylated (10%) proteins in nature. As to expression, produced by the liver, secreted into the blood and then sequestered by receptor mediated endocytosis into growing oocytes, where it is generally cleaved, giving rise to the respective yolk components lipovitellins and phosvitin.

In terms of biological role, precursor of the egg-yolk proteins that are sources of nutrients during early development of oviparous organisms. The chain is Vitellogenin-2 from Fundulus heteroclitus (Killifish).